Here is an 875-residue protein sequence, read N- to C-terminus: Translation initiation factor IF-2 (875 aa).

Disordered stretches follow at residues 123 to 204 and 240 to 278; these read EKEK…EKPK and ETKE…PVET. Residues 240-252 are compositionally biased toward basic and acidic residues; it reads ETKEEKAELEALR. The segment covering 259-268 has biased composition (basic residues); the sequence is PKKKKKKKKK. The span at 269 to 278 shows a compositional bias: basic and acidic residues; the sequence is KEEEKAPVET. In terms of domain architecture, tr-type G spans 379 to 547; that stretch reads ERPPVVTVMG…NILLVSEILE (169 aa). The G1 stretch occupies residues 388 to 395; that stretch reads GHVDHGKT. A GTP-binding site is contributed by 388 to 395; sequence GHVDHGKT. Residues 413 to 417 form a G2 region; it reads GITQH. Residues 435 to 438 form a G3 region; the sequence is DTPG. GTP contacts are provided by residues 435 to 439 and 489 to 492; these read DTPGH and NKID. The tract at residues 489–492 is G4; that stretch reads NKID. The G5 stretch occupies residues 525-527; sequence SAK.

This sequence belongs to the TRAFAC class translation factor GTPase superfamily. Classic translation factor GTPase family. IF-2 subfamily.

The protein resides in the cytoplasm. One of the essential components for the initiation of protein synthesis. Protects formylmethionyl-tRNA from spontaneous hydrolysis and promotes its binding to the 30S ribosomal subunits. Also involved in the hydrolysis of GTP during the formation of the 70S ribosomal complex. The sequence is that of Translation initiation factor IF-2 from Persephonella marina (strain DSM 14350 / EX-H1).